We begin with the raw amino-acid sequence, 452 residues long: Bifunctional protein GlmU (452 aa).

The pyrophosphorylase stretch occupies residues 1 to 225 (MEVVILAAGQ…VSETLGVNSK (225 aa)). UDP-N-acetyl-alpha-D-glucosamine is bound by residues 6–9 (LAAG), K20, Q71, 76–77 (GT), 98–100 (YGD), G135, E150, N165, and N223. D100 serves as a coordination point for Mg(2+). Residue N223 coordinates Mg(2+). The segment at 226 to 246 (PQLAELERIHQRNIAQRLMED) is linker. Residues 247–452 (GVTLIDPARI…AGWKRPVKQR (206 aa)) are N-acetyltransferase. UDP-N-acetyl-alpha-D-glucosamine-binding residues include R329 and K347. H359 acts as the Proton acceptor in catalysis. Residues Y362 and N373 each coordinate UDP-N-acetyl-alpha-D-glucosamine. Residues A376, 382–383 (NY), S401, A419, and R436 each bind acetyl-CoA.

In the N-terminal section; belongs to the N-acetylglucosamine-1-phosphate uridyltransferase family. It in the C-terminal section; belongs to the transferase hexapeptide repeat family. As to quaternary structure, homotrimer. It depends on Mg(2+) as a cofactor.

It is found in the cytoplasm. It catalyses the reaction alpha-D-glucosamine 1-phosphate + acetyl-CoA = N-acetyl-alpha-D-glucosamine 1-phosphate + CoA + H(+). It carries out the reaction N-acetyl-alpha-D-glucosamine 1-phosphate + UTP + H(+) = UDP-N-acetyl-alpha-D-glucosamine + diphosphate. It functions in the pathway nucleotide-sugar biosynthesis; UDP-N-acetyl-alpha-D-glucosamine biosynthesis; N-acetyl-alpha-D-glucosamine 1-phosphate from alpha-D-glucosamine 6-phosphate (route II): step 2/2. The protein operates within nucleotide-sugar biosynthesis; UDP-N-acetyl-alpha-D-glucosamine biosynthesis; UDP-N-acetyl-alpha-D-glucosamine from N-acetyl-alpha-D-glucosamine 1-phosphate: step 1/1. Its pathway is bacterial outer membrane biogenesis; LPS lipid A biosynthesis. Its function is as follows. Catalyzes the last two sequential reactions in the de novo biosynthetic pathway for UDP-N-acetylglucosamine (UDP-GlcNAc). The C-terminal domain catalyzes the transfer of acetyl group from acetyl coenzyme A to glucosamine-1-phosphate (GlcN-1-P) to produce N-acetylglucosamine-1-phosphate (GlcNAc-1-P), which is converted into UDP-GlcNAc by the transfer of uridine 5-monophosphate (from uridine 5-triphosphate), a reaction catalyzed by the N-terminal domain. This chain is Bifunctional protein GlmU, found in Azoarcus sp. (strain BH72).